The sequence spans 529 residues: VIN3-like protein 3 (529 aa).

A Nuclear localization signal motif is present at residues 97–104; sequence PKRQKRDL. A PHD-type zinc finger spans residues 137-207; sequence RCSCCICFKY…CFNCVSCGKT (71 aa). The Nuclear localization signal signature appears at 214–221; it reads LKKQLIIA. Residues 312–411 form the Fibronectin type-III domain; the sequence is GSMKIRIESV…FIVSTKTLQD (100 aa). Residues 421–529 are VIN3-Interacting Domain (VID); that stretch reads MSNCNNANKM…AGVSLILLQD (109 aa).

In terms of assembly, interacts with VIN3.

The protein localises to the nucleus. In terms of biological role, involved in both the vernalization and photoperiod pathways by regulating gene expression. This Arabidopsis thaliana (Mouse-ear cress) protein is VIN3-like protein 3 (VIL3).